The chain runs to 375 residues: Acyl-coenzyme A diphosphatase NUDT19 (375 aa).

Positions 15–263 (AASIVLAAGW…IWLPPPQFYE (249 aa)) constitute a Nudix hydrolase domain. The disordered stretch occupies residues 91–116 (LGPAPFSRTAFPSLPDTDDHKTDNTG). A Nudix box motif is present at residues 116–137 (GTLPEDVAFRICAVREAFEEAG). Mg(2+) is bound by residues Glu-131 and Glu-135. The Microbody targeting signal signature appears at 373–375 (SHL).

The protein belongs to the Nudix hydrolase family. In terms of assembly, monomer. Mg(2+) is required as a cofactor. The cofactor is Mn(2+).

Its subcellular location is the peroxisome. It carries out the reaction an acyl-CoA + H2O = an acyl-4'-phosphopantetheine + adenosine 3',5'-bisphosphate + 2 H(+). It catalyses the reaction CoA + H2O = (R)-4'-phosphopantetheine + adenosine 3',5'-bisphosphate + 2 H(+). The catalysed reaction is hexanoyl-CoA + H2O = hexanoyl-4'-phosphopantetheine + adenosine 3',5'-bisphosphate + 2 H(+). The enzyme catalyses octanoyl-CoA + H2O = S-octanoyl-4'-phosphopantetheine + adenosine 3',5'-bisphosphate + 2 H(+). It carries out the reaction butanoyl-CoA + H2O = S-butanoyl-4'-phosphopantetheine + adenosine 3',5'-bisphosphate + 2 H(+). It catalyses the reaction propanoyl-CoA + H2O = propanoyl-4'-phosphopantetheine + adenosine 3',5'-bisphosphate + 2 H(+). The catalysed reaction is malonyl-CoA + H2O = malonyl-4'-phosphopantetheine + adenosine 3',5'-bisphosphate + 2 H(+). The enzyme catalyses succinyl-CoA + H2O = succinyl-4'-phosphopantetheine + adenosine 3',5'-bisphosphate + 2 H(+). It carries out the reaction choloyl-CoA + H2O = S-choloyl-4'-phosphopantetheine + adenosine 3',5'-bisphosphate + 2 H(+). It catalyses the reaction 4,8-dimethylnonanoyl-CoA + H2O = S-(4,8-dimethylnonanoyl)-4'-phosphopantetheine + adenosine 3',5'-bisphosphate + 2 H(+). The catalysed reaction is (9Z,12Z,15Z)-octadecatrienoyl-CoA + H2O = S-(9Z,12Z,15Z-octadecatrienoyl)-4'-phosphopantetheine + adenosine 3',5'-bisphosphate + 2 H(+). The enzyme catalyses (9Z,12Z)-octadecadienoyl-CoA + H2O = S-(9Z,12Z-octadecadienoyl)-4'-phosphopantetheine + adenosine 3',5'-bisphosphate + 2 H(+). It carries out the reaction (9Z)-hexadecenoyl-CoA + H2O = S-(9Z-hexadecenoyl)-4'-phosphopantetheine + adenosine 3',5'-bisphosphate + 2 H(+). It catalyses the reaction (9Z)-tetradecenoyl-CoA + H2O = S-(9Z-tetradecenoyl)-4'-phosphopantetheine + adenosine 3',5'-bisphosphate + 2 H(+). The catalysed reaction is (6Z)-octenoyl-CoA + H2O = S-(6Z-octenoyl)-4'-phosphopantetheine + adenosine 3',5'-bisphosphate + 2 H(+). The enzyme catalyses hexadecanoyl-CoA + H2O = S-hexadecanoyl-4'-phosphopantetheine + adenosine 3',5'-bisphosphate + 2 H(+). It carries out the reaction tetradecanoyl-CoA + H2O = tetradecanoyl-4'-phosphopantetheine + adenosine 3',5'-bisphosphate + 2 H(+). It catalyses the reaction dodecanoyl-CoA + H2O = S-dodecanoyl-4'-phosphopantetheine + adenosine 3',5'-bisphosphate + 2 H(+). The catalysed reaction is a 5'-end CoA-ribonucleoside in mRNA + H2O = a 5'-end phospho-adenosine-phospho-ribonucleoside in mRNA + (R)-4'-phosphopantetheine + 2 H(+). Functionally, fatty acyl-coenzyme A (CoA) diphosphatase that hydrolyzes fatty acyl-CoA to yield acyl-4'-phosphopantetheine and adenosine 3',5'-bisphosphate. Mediates the hydrolysis of a wide range of CoA esters, including choloyl-CoA and branched-chain fatty-acyl-CoA esters and at low substrate concentrations medium and long-chain fatty-acyl-CoA esters are the primary substrates. Highest activity seen with medium-chain acyl-CoA esters and higher rates of activity seen with the unsaturated acyl-CoA esters compared with the saturated esters. Exhibits decapping activity towards dpCoA-capped RNAs in vitro. In Homo sapiens (Human), this protein is Acyl-coenzyme A diphosphatase NUDT19 (NUDT19).